We begin with the raw amino-acid sequence, 282 residues long: Elongation factor Ts (282 aa).

An involved in Mg(2+) ion dislocation from EF-Tu region spans residues 79–82; the sequence is TDFV.

This sequence belongs to the EF-Ts family.

It localises to the cytoplasm. Its function is as follows. Associates with the EF-Tu.GDP complex and induces the exchange of GDP to GTP. It remains bound to the aminoacyl-tRNA.EF-Tu.GTP complex up to the GTP hydrolysis stage on the ribosome. This chain is Elongation factor Ts, found in Shewanella sediminis (strain HAW-EB3).